Reading from the N-terminus, the 279-residue chain is B3 domain-containing protein Os05g0481400 (279 aa).

The tract at residues 45–68 is disordered; it reads ARLQKSTRASPKPRKKFEVGATEV. The TF-B3 DNA-binding region spans 139-230; the sequence is FVKTMVRSHV…RFKIYIIKAV (92 aa). Composition is skewed to acidic residues over residues 233-244 and 252-262; these read DANESEPADEEA and TEDAAEQDDSP. The segment at 233-279 is disordered; the sequence is DANESEPADEEAIGDKDTSTEDAAEQDDSPNAEPLKGTKRRKLRGRR. Positions 269-279 are enriched in basic residues; sequence GTKRRKLRGRR.

Its subcellular location is the nucleus. The chain is B3 domain-containing protein Os05g0481400 from Oryza sativa subsp. japonica (Rice).